A 334-amino-acid polypeptide reads, in one-letter code: Nucleoid-associated protein PMI0825 (334 aa).

It belongs to the YejK family.

It is found in the cytoplasm. Its subcellular location is the nucleoid. The polypeptide is Nucleoid-associated protein PMI0825 (Proteus mirabilis (strain HI4320)).